The primary structure comprises 142 residues: Large ribosomal subunit protein uL16 (142 aa).

Belongs to the universal ribosomal protein uL16 family. Part of the 50S ribosomal subunit.

Its function is as follows. Binds 23S rRNA and is also seen to make contacts with the A and possibly P site tRNAs. This Aquifex aeolicus (strain VF5) protein is Large ribosomal subunit protein uL16.